The following is a 218-amino-acid chain: MKFFIDTANLDQIREAHDLGVLDGVTTNPSLMAKEGIKGVENQRRHYVEICNIVQGDVSAEVIATDYEGMVREGKELAALNPHIVVKVPCIADGIKAIKHFSGQGIRTNCTLVFSTGQALLAAKAGATYVSPFVGRLDDICEDGVGLVADIVRMYRFYNYPTQVLAASIRSSKHIMECVEAGADVATCPLSAIKGLLNHPLTDAGLKKFLEDYKKVNE.

The active-site Schiff-base intermediate with substrate is the K87.

It belongs to the transaldolase family. Type 3B subfamily.

Its subcellular location is the cytoplasm. The enzyme catalyses D-sedoheptulose 7-phosphate + D-glyceraldehyde 3-phosphate = D-erythrose 4-phosphate + beta-D-fructose 6-phosphate. It functions in the pathway carbohydrate degradation; pentose phosphate pathway; D-glyceraldehyde 3-phosphate and beta-D-fructose 6-phosphate from D-ribose 5-phosphate and D-xylulose 5-phosphate (non-oxidative stage): step 2/3. Its function is as follows. Transaldolase is important for the balance of metabolites in the pentose-phosphate pathway. The polypeptide is Probable transaldolase (Bacteroides fragilis (strain ATCC 25285 / DSM 2151 / CCUG 4856 / JCM 11019 / LMG 10263 / NCTC 9343 / Onslow / VPI 2553 / EN-2)).